The following is a 120-amino-acid chain: Large ribosomal subunit protein uL18 (120 aa).

The interval 1 to 26 (MSKAKVTNARRKRSVRLKLRRSGGGR) is disordered. Residues 8–23 (NARRKRSVRLKLRRSG) are compositionally biased toward basic residues.

The protein belongs to the universal ribosomal protein uL18 family. As to quaternary structure, part of the 50S ribosomal subunit; part of the 5S rRNA/L5/L18/L25 subcomplex. Contacts the 5S and 23S rRNAs.

Functionally, this is one of the proteins that bind and probably mediate the attachment of the 5S RNA into the large ribosomal subunit, where it forms part of the central protuberance. The chain is Large ribosomal subunit protein uL18 from Bradyrhizobium diazoefficiens (strain JCM 10833 / BCRC 13528 / IAM 13628 / NBRC 14792 / USDA 110).